Consider the following 446-residue polypeptide: Exodeoxyribonuclease 7 large subunit (446 aa).

Belongs to the XseA family. In terms of assembly, heterooligomer composed of large and small subunits.

It is found in the cytoplasm. The enzyme catalyses Exonucleolytic cleavage in either 5'- to 3'- or 3'- to 5'-direction to yield nucleoside 5'-phosphates.. Functionally, bidirectionally degrades single-stranded DNA into large acid-insoluble oligonucleotides, which are then degraded further into small acid-soluble oligonucleotides. The protein is Exodeoxyribonuclease 7 large subunit of Streptococcus pneumoniae (strain ATCC 700669 / Spain 23F-1).